Consider the following 275-residue polypeptide: uncharacterized protein (275 aa).

The protein belongs to the MtfA family.

This is an uncharacterized protein from Synechocystis sp. (strain ATCC 27184 / PCC 6803 / Kazusa).